Reading from the N-terminus, the 174-residue chain is Peptide deformylase (174 aa).

Residues C94 and H136 each contribute to the Fe cation site. The active site involves E137. H140 lines the Fe cation pocket.

This sequence belongs to the polypeptide deformylase family. Fe(2+) is required as a cofactor.

It carries out the reaction N-terminal N-formyl-L-methionyl-[peptide] + H2O = N-terminal L-methionyl-[peptide] + formate. Its function is as follows. Removes the formyl group from the N-terminal Met of newly synthesized proteins. Requires at least a dipeptide for an efficient rate of reaction. N-terminal L-methionine is a prerequisite for activity but the enzyme has broad specificity at other positions. This Rhizobium meliloti (strain 1021) (Ensifer meliloti) protein is Peptide deformylase.